A 391-amino-acid polypeptide reads, in one-letter code: Stearoyl-[acyl-carrier-protein] 9-desaturase 6, chloroplastic (391 aa).

Residues 1 to 38 constitute a chloroplast transit peptide; that stretch reads MLAHKSLLSFTTQWATLMPSPSTFLASRPRGPAKISAV. 6 residues coordinate Fe cation: glutamate 130, glutamate 168, histidine 171, glutamate 221, glutamate 254, and histidine 257.

This sequence belongs to the fatty acid desaturase type 2 family. Homodimer. It depends on Fe(2+) as a cofactor.

Its subcellular location is the plastid. It is found in the chloroplast. The catalysed reaction is octadecanoyl-[ACP] + 2 reduced [2Fe-2S]-[ferredoxin] + O2 + 2 H(+) = (9Z)-octadecenoyl-[ACP] + 2 oxidized [2Fe-2S]-[ferredoxin] + 2 H2O. Its pathway is lipid metabolism; fatty acid metabolism. Functionally, converts stearoyl-ACP to oleoyl-ACP by introduction of a cis double bond between carbons 9 and 10 of the acyl chain. The chain is Stearoyl-[acyl-carrier-protein] 9-desaturase 6, chloroplastic (S-ACP-DES6) from Arabidopsis thaliana (Mouse-ear cress).